The chain runs to 102 residues: NADH-quinone oxidoreductase subunit K (102 aa).

Transmembrane regions (helical) follow at residues Leu5–Leu25, Ile31–Phe51, and Leu65–Phe85.

This sequence belongs to the complex I subunit 4L family. In terms of assembly, NDH-1 is composed of 14 different subunits. Subunits NuoA, H, J, K, L, M, N constitute the membrane sector of the complex.

It is found in the cell inner membrane. It catalyses the reaction a quinone + NADH + 5 H(+)(in) = a quinol + NAD(+) + 4 H(+)(out). NDH-1 shuttles electrons from NADH, via FMN and iron-sulfur (Fe-S) centers, to quinones in the respiratory chain. The immediate electron acceptor for the enzyme in this species is believed to be ubiquinone. Couples the redox reaction to proton translocation (for every two electrons transferred, four hydrogen ions are translocated across the cytoplasmic membrane), and thus conserves the redox energy in a proton gradient. The polypeptide is NADH-quinone oxidoreductase subunit K (Agrobacterium fabrum (strain C58 / ATCC 33970) (Agrobacterium tumefaciens (strain C58))).